Here is a 142-residue protein sequence, read N- to C-terminus: Serine/threonine-protein kinase BtrW (142 aa).

The protein belongs to the anti-sigma-factor family. Probably able to multimerize; interacts with BtrV.

It catalyses the reaction L-seryl-[protein] + ATP = O-phospho-L-seryl-[protein] + ADP + H(+). The enzyme catalyses L-threonyl-[protein] + ATP = O-phospho-L-threonyl-[protein] + ADP + H(+). In terms of biological role, possible negative regulator of sigma-B activity. Phosphorylates and inactivates its specific antagonist protein, BtrV. Upon phosphorylation of BtrV, BtrW is released and binds to an unknown partner(s) that might be sigma-B, thereby blocking its ability to form a complex with its partner (possibly an RNA polymerase holoenzyme (E-sigma-B)). Involved in type III secretion system (T3SS). Phosphorylates BtrV. The sequence is that of Serine/threonine-protein kinase BtrW (btrW) from Bordetella bronchiseptica (strain ATCC BAA-588 / NCTC 13252 / RB50) (Alcaligenes bronchisepticus).